A 261-amino-acid polypeptide reads, in one-letter code: Enolase-phosphatase E1 (261 aa).

The Mg(2+) site is built by Asp-16 and Glu-18. Residues 153-154 and Lys-187 each bind substrate; that span reads SS. Residue Asp-212 participates in Mg(2+) binding.

Belongs to the HAD-like hydrolase superfamily. MasA/MtnC family. Monomer. The cofactor is Mg(2+).

It is found in the cytoplasm. Its subcellular location is the nucleus. The catalysed reaction is 5-methylsulfanyl-2,3-dioxopentyl phosphate + H2O = 1,2-dihydroxy-5-(methylsulfanyl)pent-1-en-3-one + phosphate. Its pathway is amino-acid biosynthesis; L-methionine biosynthesis via salvage pathway; L-methionine from S-methyl-5-thio-alpha-D-ribose 1-phosphate: step 3/6. The protein operates within amino-acid biosynthesis; L-methionine biosynthesis via salvage pathway; L-methionine from S-methyl-5-thio-alpha-D-ribose 1-phosphate: step 4/6. Functionally, bifunctional enzyme that catalyzes the enolization of 2,3-diketo-5-methylthiopentyl-1-phosphate (DK-MTP-1-P) into the intermediate 2-hydroxy-3-keto-5-methylthiopentenyl-1-phosphate (HK-MTPenyl-1-P), which is then dephosphorylated to form the acireductone 1,2-dihydroxy-3-keto-5-methylthiopentene (DHK-MTPene). The chain is Enolase-phosphatase E1 (enoph1) from Danio rerio (Zebrafish).